A 1132-amino-acid chain; its full sequence is DNA-directed RNA polymerase I subunit RPA2 (1132 aa).

The C4-type zinc-finger motif lies at 1067 to 1098 (CMDCGSLLSPLLEKPPPNWSATRHRKTICLLC).

This sequence belongs to the RNA polymerase beta chain family. Component of the RNA polymerase I (Pol I) complex consisting of at least 13 subunits.

It localises to the nucleus. It is found in the nucleolus. The protein localises to the chromosome. The catalysed reaction is RNA(n) + a ribonucleoside 5'-triphosphate = RNA(n+1) + diphosphate. DNA-dependent RNA polymerase catalyzes the transcription of DNA into RNA using the four ribonucleoside triphosphates as substrates. Second largest core component of RNA polymerase I which synthesizes ribosomal RNA precursors. Proposed to contribute to the polymerase catalytic activity and forms the polymerase active center together with the largest subunit. Pol I is composed of mobile elements and RPA2 is part of the core element with the central large cleft and probably a clamp element that moves to open and close the cleft. The protein is DNA-directed RNA polymerase I subunit RPA2 (polr1b) of Danio rerio (Zebrafish).